The following is a 107-amino-acid chain: Nucleoid-associated protein Lferr_1592 (107 aa).

It belongs to the YbaB/EbfC family. Homodimer.

The protein localises to the cytoplasm. It localises to the nucleoid. Binds to DNA and alters its conformation. May be involved in regulation of gene expression, nucleoid organization and DNA protection. This chain is Nucleoid-associated protein Lferr_1592, found in Acidithiobacillus ferrooxidans (strain ATCC 53993 / BNL-5-31) (Leptospirillum ferrooxidans (ATCC 53993)).